The chain runs to 252 residues: 2-succinyl-6-hydroxy-2,4-cyclohexadiene-1-carboxylate synthase (252 aa).

It belongs to the AB hydrolase superfamily. MenH family. As to quaternary structure, monomer.

The enzyme catalyses 5-enolpyruvoyl-6-hydroxy-2-succinyl-cyclohex-3-ene-1-carboxylate = (1R,6R)-6-hydroxy-2-succinyl-cyclohexa-2,4-diene-1-carboxylate + pyruvate. Its pathway is quinol/quinone metabolism; 1,4-dihydroxy-2-naphthoate biosynthesis; 1,4-dihydroxy-2-naphthoate from chorismate: step 3/7. It functions in the pathway quinol/quinone metabolism; menaquinone biosynthesis. Catalyzes a proton abstraction reaction that results in 2,5-elimination of pyruvate from 2-succinyl-5-enolpyruvyl-6-hydroxy-3-cyclohexene-1-carboxylate (SEPHCHC) and the formation of 2-succinyl-6-hydroxy-2,4-cyclohexadiene-1-carboxylate (SHCHC). In Salmonella paratyphi B (strain ATCC BAA-1250 / SPB7), this protein is 2-succinyl-6-hydroxy-2,4-cyclohexadiene-1-carboxylate synthase.